Consider the following 111-residue polypeptide: Large ribosomal subunit protein uL22 (111 aa).

It belongs to the universal ribosomal protein uL22 family. Part of the 50S ribosomal subunit.

Its function is as follows. This protein binds specifically to 23S rRNA; its binding is stimulated by other ribosomal proteins, e.g. L4, L17, and L20. It is important during the early stages of 50S assembly. It makes multiple contacts with different domains of the 23S rRNA in the assembled 50S subunit and ribosome. In terms of biological role, the globular domain of the protein is located near the polypeptide exit tunnel on the outside of the subunit, while an extended beta-hairpin is found that lines the wall of the exit tunnel in the center of the 70S ribosome. The protein is Large ribosomal subunit protein uL22 of Chlamydia muridarum (strain MoPn / Nigg).